We begin with the raw amino-acid sequence, 378 residues long: UPF0725 protein At1g23970 (378 aa).

Belongs to the UPF0725 (EMB2204) family.

The chain is UPF0725 protein At1g23970 from Arabidopsis thaliana (Mouse-ear cress).